A 225-amino-acid chain; its full sequence is NAD(P)H-quinone oxidoreductase subunit K, chloroplastic (225 aa).

4 residues coordinate [4Fe-4S] cluster: Cys43, Cys44, Cys108, and Cys139.

Belongs to the complex I 20 kDa subunit family. In terms of assembly, NDH is composed of at least 16 different subunits, 5 of which are encoded in the nucleus. It depends on [4Fe-4S] cluster as a cofactor.

The protein resides in the plastid. It localises to the chloroplast thylakoid membrane. It catalyses the reaction a plastoquinone + NADH + (n+1) H(+)(in) = a plastoquinol + NAD(+) + n H(+)(out). The catalysed reaction is a plastoquinone + NADPH + (n+1) H(+)(in) = a plastoquinol + NADP(+) + n H(+)(out). Its function is as follows. NDH shuttles electrons from NAD(P)H:plastoquinone, via FMN and iron-sulfur (Fe-S) centers, to quinones in the photosynthetic chain and possibly in a chloroplast respiratory chain. The immediate electron acceptor for the enzyme in this species is believed to be plastoquinone. Couples the redox reaction to proton translocation, and thus conserves the redox energy in a proton gradient. The chain is NAD(P)H-quinone oxidoreductase subunit K, chloroplastic from Arabis hirsuta (Hairy rock-cress).